Reading from the N-terminus, the 380-residue chain is Cytochrome b (380 aa).

The next 4 helical transmembrane spans lie at 34–54 (FGSL…LLAM), 78–99 (WLIR…YLHI), 114–134 (WNTG…GYVL), and 179–199 (FFAL…IHLT). Positions 84 and 98 each coordinate heme b. Heme b contacts are provided by histidine 183 and histidine 197. Position 202 (histidine 202) interacts with a ubiquinone. A run of 4 helical transmembrane segments spans residues 227-247 (LKDF…ALFS), 289-309 (LGGV…PFLH), 321-341 (ISQL…WVGS), and 348-368 (FIII…ILFP).

This sequence belongs to the cytochrome b family. As to quaternary structure, the cytochrome bc1 complex contains 11 subunits: 3 respiratory subunits (MT-CYB, CYC1 and UQCRFS1), 2 core proteins (UQCRC1 and UQCRC2) and 6 low-molecular weight proteins (UQCRH/QCR6, UQCRB/QCR7, UQCRQ/QCR8, UQCR10/QCR9, UQCR11/QCR10 and a cleavage product of UQCRFS1). This cytochrome bc1 complex then forms a dimer. Heme b serves as cofactor.

The protein localises to the mitochondrion inner membrane. Component of the ubiquinol-cytochrome c reductase complex (complex III or cytochrome b-c1 complex) that is part of the mitochondrial respiratory chain. The b-c1 complex mediates electron transfer from ubiquinol to cytochrome c. Contributes to the generation of a proton gradient across the mitochondrial membrane that is then used for ATP synthesis. This chain is Cytochrome b (MT-CYB), found in Pelecanoides urinatrix (Common diving petrel).